Consider the following 869-residue polypeptide: Leucine--tRNA ligase (869 aa).

Residues 42 to 52 (PYPSGRLHMGH) carry the 'HIGH' region motif. Residues 620-624 (KMSKS) carry the 'KMSKS' region motif. Lys-623 contributes to the ATP binding site.

It belongs to the class-I aminoacyl-tRNA synthetase family.

The protein resides in the cytoplasm. The catalysed reaction is tRNA(Leu) + L-leucine + ATP = L-leucyl-tRNA(Leu) + AMP + diphosphate. In Hamiltonella defensa subsp. Acyrthosiphon pisum (strain 5AT), this protein is Leucine--tRNA ligase.